The primary structure comprises 379 residues: Alanine racemase (379 aa).

Catalysis depends on Lys-41, which acts as the Proton acceptor; specific for D-alanine. Lys-41 carries the post-translational modification N6-(pyridoxal phosphate)lysine. Arg-138 lines the substrate pocket. Tyr-260 functions as the Proton acceptor; specific for L-alanine in the catalytic mechanism. Residue Met-319 participates in substrate binding.

The protein belongs to the alanine racemase family. Pyridoxal 5'-phosphate serves as cofactor.

It catalyses the reaction L-alanine = D-alanine. It participates in amino-acid biosynthesis; D-alanine biosynthesis; D-alanine from L-alanine: step 1/1. Its function is as follows. Catalyzes the interconversion of L-alanine and D-alanine. May also act on other amino acids. This chain is Alanine racemase (alr), found in Rhizobium meliloti (strain 1021) (Ensifer meliloti).